We begin with the raw amino-acid sequence, 432 residues long: MAKNVVVLGTQWGDEGKGKVVDLLTDKATYVVRYQGGHNAGHTLVIDGEKTVLHLIPSGILRENVTCVIGNGVVLSPEALLKESAMLEERGVPVKERLRISEACPLILPFHVELDLAREKARGDKPIGTTGRGIGPAYEDKVSRRGLRVGDLFNPTDFAVKLKEVLEYHNFMLTNYYKVEPVSYEKTLADALAVADILKAMVVDVTDVLDRARKRGDEIMFEGAQGTLLDIDHGTYPYVTSSNTTVGGVATGAGFGPLHLDYVLGIVKAYTTRVGSGPFPTELGCDVGQHLGIKGHEFGATTGRKRRTGWFDAVAMKRAVQINSITGFCLTKLDVLDGLETLSICTGYKHADGTVKDVPPMAADDYELITPVYEEMPGWSENSFGVTEYDNLPQAAKNYIKRLEELTGVPIDIISTGPDRNETIVLRHPFEV.

GTP is bound by residues 13–19 and 41–43; these read GDEGKGK and GHT. Residue aspartate 14 is the Proton acceptor of the active site. Residues aspartate 14 and glycine 41 each contribute to the Mg(2+) site. IMP contacts are provided by residues 14–17, 39–42, threonine 130, arginine 144, glutamine 225, threonine 240, and arginine 304; these read DEGK and NAGH. The active-site Proton donor is histidine 42. Residue 300-306 coordinates substrate; it reads ATTGRKR. GTP contacts are provided by residues arginine 306, 332–334, and 415–417; these read KLD and STG.

The protein belongs to the adenylosuccinate synthetase family. In terms of assembly, homodimer. It depends on Mg(2+) as a cofactor.

It is found in the cytoplasm. The enzyme catalyses IMP + L-aspartate + GTP = N(6)-(1,2-dicarboxyethyl)-AMP + GDP + phosphate + 2 H(+). It functions in the pathway purine metabolism; AMP biosynthesis via de novo pathway; AMP from IMP: step 1/2. Its function is as follows. Plays an important role in the de novo pathway of purine nucleotide biosynthesis. Catalyzes the first committed step in the biosynthesis of AMP from IMP. The sequence is that of Adenylosuccinate synthetase from Pseudoalteromonas atlantica (strain T6c / ATCC BAA-1087).